Reading from the N-terminus, the 82-residue chain is Cytochrome b-c1 complex subunit 8 (82 aa).

Topologically, residues 1–43 (MGREFGNLARIRHVISYSLSPFEQRAFPSYFSKGIPNVLRRTR) are mitochondrial matrix. Ser16 is modified (phosphoserine). Lys33 is subject to N6-acetyllysine; alternate. The residue at position 33 (Lys33) is an N6-succinyllysine; alternate. Residues 44-62 (ERILRVAPPFVVVYLIYTW) traverse the membrane as a helical segment. Topologically, residues 63-82 (GNQEFEQSKRKNPAMYENDK) are mitochondrial intermembrane.

The protein belongs to the UQCRQ/QCR8 family. Component of the ubiquinol-cytochrome c oxidoreductase (cytochrome b-c1 complex, complex III, CIII), a multisubunit enzyme composed of 11 subunits. The complex is composed of 3 respiratory subunits cytochrome b, cytochrome c1 and Rieske protein UQCRFS1, 2 core protein subunits UQCRC1/QCR1 and UQCRC2/QCR2, and 6 low-molecular weight protein subunits UQCRH/QCR6, UQCRB/QCR7, UQCRQ/QCR8, UQCR10/QCR9, UQCR11/QCR10 and subunit 9, the cleavage product of Rieske protein UQCRFS1. The complex exists as an obligatory dimer and forms supercomplexes (SCs) in the inner mitochondrial membrane with NADH-ubiquinone oxidoreductase (complex I, CI) and cytochrome c oxidase (complex IV, CIV), resulting in different assemblies (supercomplex SCI(1)III(2)IV(1) and megacomplex MCI(2)III(2)IV(2)). Interacts with UQCC6.

It is found in the mitochondrion inner membrane. In terms of biological role, component of the ubiquinol-cytochrome c oxidoreductase, a multisubunit transmembrane complex that is part of the mitochondrial electron transport chain which drives oxidative phosphorylation. The respiratory chain contains 3 multisubunit complexes succinate dehydrogenase (complex II, CII), ubiquinol-cytochrome c oxidoreductase (cytochrome b-c1 complex, complex III, CIII) and cytochrome c oxidase (complex IV, CIV), that cooperate to transfer electrons derived from NADH and succinate to molecular oxygen, creating an electrochemical gradient over the inner membrane that drives transmembrane transport and the ATP synthase. The cytochrome b-c1 complex catalyzes electron transfer from ubiquinol to cytochrome c, linking this redox reaction to translocation of protons across the mitochondrial inner membrane, with protons being carried across the membrane as hydrogens on the quinol. In the process called Q cycle, 2 protons are consumed from the matrix, 4 protons are released into the intermembrane space and 2 electrons are passed to cytochrome c. This Mus musculus (Mouse) protein is Cytochrome b-c1 complex subunit 8 (Uqcrq).